Here is a 965-residue protein sequence, read N- to C-terminus: Transmembrane channel-like protein 5 (965 aa).

Composition is skewed to polar residues over residues 1 to 10 (MSSFHKNSSY) and 20 to 31 (SGSQNHTQNYLR). The tract at residues 1–235 (MSSFHKNSSY…GAEEGDVYSP (235 aa)) is disordered. The Extracellular portion of the chain corresponds to 1–417 (MSSFHKNSSY…YFSFLRWLLK (417 aa)). Positions 61–70 (TNPDYHHSLA) are enriched in basic and acidic residues. Polar residues predominate over residues 166–181 (QGNSYHSGPRSHSNLP). A Phosphoserine modification is found at Ser-248. Residues 418 to 438 (FNIFSFVMNFSFIIIPQFTVG) form a helical membrane-spanning segment. The Cytoplasmic portion of the chain corresponds to 439-444 (EKNTLQ). A helical transmembrane segment spans residues 445-467 (FTGLEFFTGAGYFRETVMYYGFY). At 468–484 (TNSTIRHRMGGASYNMQ) the chain is on the extracellular side. The helical transmembrane segment at 485–505 (LAYIFTIGACLVICFFSLLFS) threads the bilayer. The Cytoplasmic portion of the chain corresponds to 506-578 (MAKYFRNNFI…NQKLTRFSVH (73 aa)). The chain crosses the membrane as a helical span at residues 579-599 (VAAWLVSTGITAACCVAVYYL). Residues 600–613 (AEYNSEFLKTHKNP) lie on the Extracellular side of the membrane. Residues 614–634 (GAVLLLPFVVSCINLAVPRFY) form a helical membrane-spanning segment. Residues 635–657 (SMFRLVERYEIPRQEVYVLLIRN) are Cytoplasmic-facing. Residues 658-678 (IFLKISIVGILCYYWLNIVAL) traverse the membrane as a helical segment. Residues 679-691 (SGEECWETLIGQD) are Extracellular-facing. The helical transmembrane segment at 692–712 (IYRLLLMDFVFSLADSLLGEF) threads the bilayer. Residues 713-747 (LRRLIGMKFITSLSLQEFDIARNVLELIYAQTLAW) are Cytoplasmic-facing. Residues 748–768 (LGIFFCPLLPFIQMITLFIMF) traverse the membrane as a helical segment. Residues 769–794 (YVKNVSLMMNFQPPSKAWRASQMITF) lie on the Extracellular side of the membrane. A helical transmembrane segment spans residues 795-815 (FIFLLFFPSFTGVLCTLAITI). Topologically, residues 816–859 (WRLKPSADCGPFRGLPSFIQSIYSWIDTLSHRPGYLWVVWIYQN) are cytoplasmic. A helical membrane pass occupies residues 860–880 (LIGSVHFFFILTLIVLIITYL). Residues 881 to 965 (YWQITEGRKV…RSMQEENAIA (85 aa)) lie on the Extracellular side of the membrane.

This sequence belongs to the TMC family.

Its subcellular location is the membrane. Probable component of an ion channel. Molecular function hasn't been characterized yet. The sequence is that of Transmembrane channel-like protein 5 from Rattus norvegicus (Rat).